Reading from the N-terminus, the 528-residue chain is Potassium voltage-gated channel subfamily A member 3 (528 aa).

The disordered stretch occupies residues 1-32 (MTVVPGDHLLEPEAAGGGGGDPPQGGCGSGGG). The Cytoplasmic portion of the chain corresponds to 1–187 (MTVVPGDHLL…EYPESSGPAR (187 aa)). A compositionally biased stretch (gly residues) spans 15-32 (AGGGGGDPPQGGCGSGGG). A helical transmembrane segment spans residues 188–206 (GIAIVSVLVILISIVIFCL). Residues 207-247 (ETLPEFRDEKDYPASPSQDVFEAANNSTSGAPSGASSFSDP) are Extracellular-facing. The N-linked (GlcNAc...) asparagine glycan is linked to asparagine 232. A helical transmembrane segment spans residues 248-269 (FFVVETLCIIWFSFELLVRFFA). Cysteine 270 carries the S-palmitoyl cysteine lipid modification. Over 270 to 280 (CPSKATFSRNI) the chain is Cytoplasmic. A helical transmembrane segment spans residues 281–301 (MNLIDIVAIIPYFITLGTELA). At 302–315 (ERQGNGQQAMSLAI) the chain is on the extracellular side. A helical; Voltage-sensor transmembrane segment spans residues 316–334 (LRVIRLVRVFRIFKLSRHS). Topologically, residues 335–350 (KGLQILGQTLKASMRE) are cytoplasmic. Residues 351 to 370 (LGLLIFFLFIGVILFSSAVY) traverse the membrane as a helical segment. The Extracellular segment spans residues 371 to 411 (FAEADDPSSGFNSIPDAFWWAVVTMTTVGYGDMHPVTIGGK). Residues 397 to 402 (TVGYGD) carry the Selectivity filter motif. A helical membrane pass occupies residues 412 to 434 (IVGSLCAIAGVLTIALPVPVIVS). Over 435-528 (NFNYFYHRET…VNIKKIFTDV (94 aa)) the chain is Cytoplasmic. The segment at 435 to 528 (NFNYFYHRET…VNIKKIFTDV (94 aa)) is interaction with KCNE4. Tyrosine 452 bears the Phosphotyrosine mark. Residue serine 473 is modified to Phosphoserine; by PKA. A PDZ-binding motif is present at residues 526–528 (TDV).

This sequence belongs to the potassium channel family. A (Shaker) (TC 1.A.1.2) subfamily. Kv1.3/KCNA3 sub-subfamily. In terms of assembly, homotetramer. Forms heterooligomers with KCNE4 which inhibits KCNA3 activity by impairing localization to the cell membrane. The stoichiometry of KCNA3 and KCNE4 in the heterooligomers are 4:1, 4:2, 4:3 or 4:4 respectively. Increasing the number of KCNE4 subunits steadily slows the activation KCNA3 and decreases its abundance at the cell membrane. However, a single subunit of KCNE4 is sufficient for the cooperative enhancement of the inactivating function of the channel. Interacts with SEC24D; this interaction is reduced in the presence of KCNE4. Interacts with DLG1, DLG2 and DLG4 via their PDZ domains. In terms of processing, N-glycosylation promotes the cell surface expression. Post-translationally, phosphorylation on Tyr-452 inhibits its channel activity.

It is found in the cell membrane. It carries out the reaction K(+)(in) = K(+)(out). Activity is up-regulated by JAK2. Mediates the voltage-dependent potassium ion permeability of excitable membranes. Assuming opened or closed conformations in response to the voltage difference across the membrane, the protein forms a potassium-selective channel through which potassium ions may pass in accordance with their electrochemical gradient. In Mus musculus (Mouse), this protein is Potassium voltage-gated channel subfamily A member 3 (Kcna3).